Consider the following 923-residue polypeptide: Periodic tryptophan protein 2 (923 aa).

5 WD repeats span residues 12–52, 53–93, 94–132, 144–183, and 189–228; these read GTVY…TFEY, EHRK…LHHF, NFKE…KDRQ, GHFQ…KNLA, and GHRD…SDDD. Residues S225 and S232 each carry the phosphoserine modification. WD repeat units follow at residues 258 to 297, 300 to 340, 343 to 382, 385 to 424, 428 to 470, 471 to 510, 513 to 552, and 575 to 614; these read ANQA…LIQQ, MGQN…YILK, GHFD…CLAT, EHTS…NFRT, TERI…DALS, GHEG…QQVE, EVYS…QVGN, and ERSK…LLKR. S651 and S664 each carry phosphoserine. Positions 653 to 674 are disordered; that stretch reads LEDRIDNSLPGSQRGGDLSTRK. The WD 14 repeat unit spans residues 676 to 714; sequence RPEVRVTSVQFSPTANAFAAASTEGLLIYSTNDTILFDP. 2 stretches are compositionally biased toward acidic residues: residues 869 to 893 and 911 to 923; these read KDDA…DEEG and DSSD…KELP. The segment at 869 to 923 is disordered; that stretch reads KDDADEDNEENEENDVVMESDDEEGWIGFNGKDNKLPLSNENDSSDEEENEKELP. A phosphoserine mark is found at S912 and S913.

This sequence belongs to the WD repeat PWP2 family. In terms of assembly, interacts with snoRNA U3. Interacts with MPP10. Component of the ribosomal small subunit (SSU) processome composed of at least 40 protein subunits and snoRNA U3.

It is found in the nucleus. It localises to the nucleolus. Functionally, required for bud-site selection and cell separation. Also involved in nucleolar processing of pre-18S ribosomal RNA. This is Periodic tryptophan protein 2 (PWP2) from Saccharomyces cerevisiae (strain ATCC 204508 / S288c) (Baker's yeast).